Reading from the N-terminus, the 258-residue chain is Mediator of RNA polymerase II transcription subunit 4 (258 aa).

Positions 52-101 (FRKMLELAEEQAKVEEAMDQLRAKVEVHDREIQKLQKSLKDAELILSTAI) form a coiled coil. Disordered regions lie at residues 164-208 (GKSE…EVPN) and 234-258 (LETR…SDSQ). A compositionally biased stretch (polar residues) spans 166–190 (SEQNINGGTVTHQNSGMPSEQQRTL). Positions 194–204 (AGSGSGSGAGG) are enriched in gly residues. Low complexity predominate over residues 246 to 258 (STDSSSSSSSDSQ).

The protein belongs to the Mediator complex subunit 4 family. As to quaternary structure, component of the Mediator complex, which includes at least MED4, MED6, MED14, MED17, MED18, MED20, MED21, MED23, MED24, MED27, MED30 and MED31. Interacts with MED10 and MED21.

The protein localises to the nucleus. Component of the Mediator complex, a coactivator involved in the regulated transcription of nearly all RNA polymerase II-dependent genes. Mediator functions as a bridge to convey information from gene-specific regulatory proteins to the basal RNA polymerase II transcription machinery. Mediator is recruited to promoters by direct interactions with regulatory proteins and serves as a scaffold for the assembly of a functional preinitiation complex with RNA polymerase II and the general transcription factors. Required for activated transcription of the MtnA, MtnB and MtnD genes. The sequence is that of Mediator of RNA polymerase II transcription subunit 4 (MED4) from Drosophila melanogaster (Fruit fly).